A 483-amino-acid chain; its full sequence is Argininosuccinate lyase (483 aa).

The protein belongs to the lyase 1 family. Argininosuccinate lyase subfamily.

The protein resides in the cytoplasm. The enzyme catalyses 2-(N(omega)-L-arginino)succinate = fumarate + L-arginine. It participates in amino-acid biosynthesis; L-arginine biosynthesis; L-arginine from L-ornithine and carbamoyl phosphate: step 3/3. This is Argininosuccinate lyase from Archaeoglobus fulgidus (strain ATCC 49558 / DSM 4304 / JCM 9628 / NBRC 100126 / VC-16).